Here is a 123-residue protein sequence, read N- to C-terminus: Small ribosomal subunit protein uS12cz/uS12cy (123 aa).

Belongs to the universal ribosomal protein uS12 family. As to quaternary structure, part of the 30S ribosomal subunit.

The protein localises to the plastid. Its subcellular location is the chloroplast. In terms of biological role, with S4 and S5 plays an important role in translational accuracy. Located at the interface of the 30S and 50S subunits. This chain is Small ribosomal subunit protein uS12cz/uS12cy (rps12-A), found in Psilotum nudum (Whisk fern).